The chain runs to 116 residues: POU domain, class 4, transcription factor 1 (116 aa).

The 54-residue stretch at 1-54 (VTQADVGSALANLKIPGVGSLSQSTICRFESLTLSHNNMIALKPILQAWLEEAE) folds into the POU-specific domain. Positions 56 to 79 (AQREKMNKPELFNGGEKKRKRTSI) are disordered. Positions 72–116 (KKRKRTSIAAPEKRSLEAYFAVQPRPSSEKIAAIAEKLDLKKNVV) form a DNA-binding region, homeobox.

This sequence belongs to the POU transcription factor family. Class-4 subfamily.

It localises to the nucleus. The protein resides in the cytoplasm. In terms of biological role, multifunctional transcription factor with different regions mediating its different effects. Acts by binding (via its C-terminal domain) to sequences related to the consensus octamer motif 5'-ATGCAAAT-3' in the regulatory regions of its target genes. Regulates the expression of specific genes involved in differentiation and survival within a subset of neuronal lineages. It has been shown that activation of some of these genes requires its N-terminal domain, maybe through a neuronal-specific cofactor. This chain is POU domain, class 4, transcription factor 1 (POU4F1), found in Gallus gallus (Chicken).